The chain runs to 428 residues: uncharacterized protein (428 aa).

3 disordered regions span residues 1–25 (MRDNSAKGITAGSESQQTTYDPTRT), 157–219 (DTAK…TEQV), and 247–271 (DFGTTPSSSGSGGNSNPGSPTPWRP). The segment covering 12–22 (GSESQQTTYDP) has biased composition (polar residues). Basic and acidic residues predominate over residues 157-171 (DTAKSNEKLQGDESK). Low complexity predominate over residues 172-186 (SSNGSSSTSTTTQRG). Over residues 206-217 (GSQGNSGEQGTE) the composition is skewed to polar residues.

It belongs to the adhesin P1 family.

This is an uncharacterized protein from Mycoplasma pneumoniae (strain ATCC 29342 / M129 / Subtype 1) (Mycoplasmoides pneumoniae).